The primary structure comprises 359 residues: DNA polymerase IV (359 aa).

One can recognise a UmuC domain in the interval 7–188 (IIHIDMDAFY…LPIGKFFGVG (182 aa)). Residues Asp11 and Asp106 each contribute to the Mg(2+) site. Glu107 is a catalytic residue.

It belongs to the DNA polymerase type-Y family. As to quaternary structure, monomer. It depends on Mg(2+) as a cofactor.

The protein localises to the cytoplasm. The catalysed reaction is DNA(n) + a 2'-deoxyribonucleoside 5'-triphosphate = DNA(n+1) + diphosphate. Functionally, poorly processive, error-prone DNA polymerase involved in untargeted mutagenesis. Copies undamaged DNA at stalled replication forks, which arise in vivo from mismatched or misaligned primer ends. These misaligned primers can be extended by PolIV. Exhibits no 3'-5' exonuclease (proofreading) activity. May be involved in translesional synthesis, in conjunction with the beta clamp from PolIII. In Clostridium perfringens (strain 13 / Type A), this protein is DNA polymerase IV.